A 208-amino-acid chain; its full sequence is MTNKDESVEKNTESTVEETNVKQNIDDSVEQAEESKGHLQDEAIEETSDENVIEEIDPKDQKINELQQLADENEEKYLRLYAEFENYKRRIQKENEINKTYQAQRVLTDILPAIDNIERALQIEGDDETFKSLQKGVQMVHESLINALKDNGLEVIKTEGEAFDPNIHQAVVQDDNPDFESGEITQELQKGYKLKDRVLRPSMVKVNQ.

The span at 1–12 (MTNKDESVEKNT) shows a compositional bias: basic and acidic residues. A disordered region spans residues 1–51 (MTNKDESVEKNTESTVEETNVKQNIDDSVEQAEESKGHLQDEAIEETSDEN). Positions 13 to 23 (ESTVEETNVKQ) are enriched in polar residues. The segment covering 42-51 (EAIEETSDEN) has biased composition (acidic residues).

The protein belongs to the GrpE family. In terms of assembly, homodimer.

The protein localises to the cytoplasm. Its function is as follows. Participates actively in the response to hyperosmotic and heat shock by preventing the aggregation of stress-denatured proteins, in association with DnaK and GrpE. It is the nucleotide exchange factor for DnaK and may function as a thermosensor. Unfolded proteins bind initially to DnaJ; upon interaction with the DnaJ-bound protein, DnaK hydrolyzes its bound ATP, resulting in the formation of a stable complex. GrpE releases ADP from DnaK; ATP binding to DnaK triggers the release of the substrate protein, thus completing the reaction cycle. Several rounds of ATP-dependent interactions between DnaJ, DnaK and GrpE are required for fully efficient folding. The polypeptide is Protein GrpE (Staphylococcus aureus (strain USA300)).